Here is a 291-residue protein sequence, read N- to C-terminus: 3-hydroxy-5-phosphonooxypentane-2,4-dione thiolase (291 aa).

Lys203 functions as the Schiff-base intermediate with substrate in the catalytic mechanism.

Belongs to the DeoC/FbaB aldolase family. In terms of assembly, homodecamer.

Its subcellular location is the cytoplasm. The catalysed reaction is dihydroxyacetone phosphate + acetyl-CoA = 3-hydroxy-2,4-dioxopentyl phosphate + CoA. Functionally, involved in the degradation of phospho-AI-2, thereby terminating induction of the lsr operon and closing the AI-2 signaling cycle. Catalyzes the transfer of an acetyl moiety from 3-hydroxy-5-phosphonooxypentane-2,4-dione to CoA to form glycerone phosphate and acetyl-CoA. This Salmonella typhimurium (strain LT2 / SGSC1412 / ATCC 700720) protein is 3-hydroxy-5-phosphonooxypentane-2,4-dione thiolase.